The primary structure comprises 132 residues: Bombinin-like peptides (132 aa).

The signal sequence occupies residues 1-18 (MNFKYIIAVSFLIASAYA). A propeptide spanning residues 19-42 (RSEEYDIQSLSQRDVLEEESLRKI) is cleaved from the precursor. The residue at position 68 (F68) is a Phenylalanine amide. A propeptide spanning residues 72–112 (TAEDHEVMKRLEAAMRDLDSLDYPEEASERETRGFNQEEKE) is cleaved from the precursor. L131 bears the Leucine amide mark.

Belongs to the bombinin family. As to expression, expressed by the skin glands.

The protein resides in the secreted. Has antimicrobial activity against Gram-negative bacterium E.coli (MIC=26.3 uM), Gram-positive bacterium S.aureus (MIC=26.3 uM) and yeast C.albicans (MIC=52.5 uM). Has moderate hemolytic activity towards human erythrocytes at a concentration of 52.2 uM. Its function is as follows. Has no antimicrobial activity at concentrations up to 161 uM. Has moderate hemolytic activity towards human erythrocytes at a concentration of 40.3 uM. This is Bombinin-like peptides from Bombina orientalis (Oriental fire-bellied toad).